The sequence spans 155 residues: Ribosomal RNA large subunit methyltransferase H (155 aa).

Residues L72, G104, and 123–128 (LSKMTF) each bind S-adenosyl-L-methionine.

Belongs to the RNA methyltransferase RlmH family. Homodimer.

It localises to the cytoplasm. It catalyses the reaction pseudouridine(1915) in 23S rRNA + S-adenosyl-L-methionine = N(3)-methylpseudouridine(1915) in 23S rRNA + S-adenosyl-L-homocysteine + H(+). Functionally, specifically methylates the pseudouridine at position 1915 (m3Psi1915) in 23S rRNA. In Cytophaga hutchinsonii (strain ATCC 33406 / DSM 1761 / CIP 103989 / NBRC 15051 / NCIMB 9469 / D465), this protein is Ribosomal RNA large subunit methyltransferase H.